Reading from the N-terminus, the 75-residue chain is Carwaprin-a (75 aa).

A signal peptide spans 1-24; that stretch reads MSSGGLLLLLGLLTLWAELTPISG. Positions 27–72 constitute a WAP domain; that stretch reads RPKKPGLCPPRPQKPPCVRECKNDWRCPGEQKCCRYGCIYECRDPI. 4 disulfides stabilise this stretch: C34-C60, C43-C64, C47-C59, and C53-C68.

The protein belongs to the venom waprin family. Expressed by the venom gland.

The protein localises to the secreted. In terms of biological role, damages membranes of susceptible bacteria. Has no hemolytic activity. Not toxic to mice. Does not inhibit the proteinases elastase and cathepsin G. The sequence is that of Carwaprin-a from Tropidechis carinatus (Australian rough-scaled snake).